A 404-amino-acid chain; its full sequence is 5-aminolevulinate synthase (404 aa).

R21 and S136 together coordinate substrate. Pyridoxal 5'-phosphate is bound by residues S188, H216, and T244. Residue K247 is part of the active site. An N6-(pyridoxal phosphate)lysine modification is found at K247. 2 residues coordinate pyridoxal 5'-phosphate: T276 and T277. Residue T362 coordinates substrate.

This sequence belongs to the class-II pyridoxal-phosphate-dependent aminotransferase family. In terms of assembly, homodimer. Pyridoxal 5'-phosphate serves as cofactor.

The catalysed reaction is succinyl-CoA + glycine + H(+) = 5-aminolevulinate + CO2 + CoA. The protein operates within porphyrin-containing compound metabolism; protoporphyrin-IX biosynthesis; 5-aminolevulinate from glycine: step 1/1. This Rhizobium meliloti (strain 1021) (Ensifer meliloti) protein is 5-aminolevulinate synthase (hemA).